Reading from the N-terminus, the 392-residue chain is Alanine racemase 2 (392 aa).

The active-site Proton acceptor; specific for D-alanine is lysine 40. Lysine 40 carries the post-translational modification N6-(pyridoxal phosphate)lysine. Substrate is bound at residue arginine 138. Tyrosine 266 (proton acceptor; specific for L-alanine) is an active-site residue. Substrate is bound at residue methionine 314.

Belongs to the alanine racemase family. It depends on pyridoxal 5'-phosphate as a cofactor.

The enzyme catalyses L-alanine = D-alanine. Its pathway is amino-acid biosynthesis; D-alanine biosynthesis; D-alanine from L-alanine: step 1/1. Its function is as follows. Catalyzes the interconversion of L-alanine and D-alanine. May also act on other amino acids. This Oceanobacillus iheyensis (strain DSM 14371 / CIP 107618 / JCM 11309 / KCTC 3954 / HTE831) protein is Alanine racemase 2 (alr2).